Here is a 472-residue protein sequence, read N- to C-terminus: Glutamyl-tRNA(Gln) amidotransferase subunit A (472 aa).

Residues Lys69 and Ser144 each act as charge relay system in the active site. Residue Ser168 is the Acyl-ester intermediate of the active site.

This sequence belongs to the amidase family. GatA subfamily. In terms of assembly, heterotrimer of A, B and C subunits.

The catalysed reaction is L-glutamyl-tRNA(Gln) + L-glutamine + ATP + H2O = L-glutaminyl-tRNA(Gln) + L-glutamate + ADP + phosphate + H(+). In terms of biological role, allows the formation of correctly charged Gln-tRNA(Gln) through the transamidation of misacylated Glu-tRNA(Gln) in organisms which lack glutaminyl-tRNA synthetase. The reaction takes place in the presence of glutamine and ATP through an activated gamma-phospho-Glu-tRNA(Gln). The sequence is that of Glutamyl-tRNA(Gln) amidotransferase subunit A from Sulfurisphaera tokodaii (strain DSM 16993 / JCM 10545 / NBRC 100140 / 7) (Sulfolobus tokodaii).